Consider the following 257-residue polypeptide: Mitochondrial distribution and morphology protein 12 (257 aa).

Residues 1-256 (MSFEINWEKL…WPSWVNLDFN (256 aa)) enclose the SMP-LTD domain. Positions 74–98 (YEEDNETSSEMHGRDGQNVGESGEE) are disordered.

Belongs to the MDM12 family. Component of the ER-mitochondria encounter structure (ERMES) or MDM complex, composed of MMM1, MDM10, MDM12 and MDM34. An MMM1 homodimer associates with one molecule of MDM12 on each side in a pairwise head-to-tail manner, and the SMP-LTD domains of MMM1 and MDM12 generate a continuous hydrophobic tunnel for phospholipid trafficking.

The protein resides in the mitochondrion outer membrane. The protein localises to the endoplasmic reticulum membrane. Its function is as follows. Component of the ERMES/MDM complex, which serves as a molecular tether to connect the endoplasmic reticulum (ER) and mitochondria. Components of this complex are involved in the control of mitochondrial shape and protein biogenesis, and function in nonvesicular lipid trafficking between the ER and mitochondria. MDM12 is required for the interaction of the ER-resident membrane protein MMM1 and the outer mitochondrial membrane-resident beta-barrel protein MDM10. The MDM12-MMM1 subcomplex functions in the major beta-barrel assembly pathway that is responsible for biogenesis of all mitochondrial outer membrane beta-barrel proteins, and acts in a late step after the SAM complex. The MDM10-MDM12-MMM1 subcomplex further acts in the TOM40-specific pathway after the action of the MDM12-MMM1 complex. Essential for establishing and maintaining the structure of mitochondria and maintenance of mtDNA nucleoids. This chain is Mitochondrial distribution and morphology protein 12, found in Candida glabrata (strain ATCC 2001 / BCRC 20586 / JCM 3761 / NBRC 0622 / NRRL Y-65 / CBS 138) (Yeast).